The sequence spans 161 residues: Protein UXT homolog (161 aa).

It belongs to the UXT family.

The polypeptide is Protein UXT homolog (Dictyostelium discoideum (Social amoeba)).